Here is a 399-residue protein sequence, read N- to C-terminus: Argininosuccinate synthase (399 aa).

8-16 (AYSGGLDTS) is a binding site for ATP. Tyr-87 provides a ligand contact to L-citrulline. Gly-117 provides a ligand contact to ATP. Positions 119, 123, and 124 each coordinate L-aspartate. Asn-123 provides a ligand contact to L-citrulline. Residues Arg-127, Ser-175, Glu-260, and Tyr-272 each coordinate L-citrulline.

Belongs to the argininosuccinate synthase family. Type 1 subfamily. As to quaternary structure, homotetramer.

The protein localises to the cytoplasm. The catalysed reaction is L-citrulline + L-aspartate + ATP = 2-(N(omega)-L-arginino)succinate + AMP + diphosphate + H(+). Its pathway is amino-acid biosynthesis; L-arginine biosynthesis; L-arginine from L-ornithine and carbamoyl phosphate: step 2/3. This chain is Argininosuccinate synthase, found in Rhodococcus jostii (strain RHA1).